A 444-amino-acid polypeptide reads, in one-letter code: tRNA-2-methylthio-N(6)-dimethylallyladenosine synthase (444 aa).

One can recognise an MTTase N-terminal domain in the interval 2 to 119 (KKVYIKTFGC…LPDLIESRKQ (118 aa)). [4Fe-4S] cluster-binding residues include C11, C48, C82, C156, C160, and C163. Residues 142–374 (KVDGGAAFVS…NEVIEAKGYA (233 aa)) enclose the Radical SAM core domain. The region spanning 377 to 440 (QSMVGTVQRV…PHSLAGEALT (64 aa)) is the TRAM domain.

Belongs to the methylthiotransferase family. MiaB subfamily. In terms of assembly, monomer. It depends on [4Fe-4S] cluster as a cofactor.

The protein localises to the cytoplasm. It carries out the reaction N(6)-dimethylallyladenosine(37) in tRNA + (sulfur carrier)-SH + AH2 + 2 S-adenosyl-L-methionine = 2-methylsulfanyl-N(6)-dimethylallyladenosine(37) in tRNA + (sulfur carrier)-H + 5'-deoxyadenosine + L-methionine + A + S-adenosyl-L-homocysteine + 2 H(+). Catalyzes the methylthiolation of N6-(dimethylallyl)adenosine (i(6)A), leading to the formation of 2-methylthio-N6-(dimethylallyl)adenosine (ms(2)i(6)A) at position 37 in tRNAs that read codons beginning with uridine. This Chromobacterium violaceum (strain ATCC 12472 / DSM 30191 / JCM 1249 / CCUG 213 / NBRC 12614 / NCIMB 9131 / NCTC 9757 / MK) protein is tRNA-2-methylthio-N(6)-dimethylallyladenosine synthase.